The following is a 1284-amino-acid chain: ATP-dependent helicase fft2 (1284 aa).

Composition is skewed to polar residues over residues 1–10 (MLPYNSNYLS) and 20–57 (ENPQ…AMYG). Disordered stretches follow at residues 1-57 (MLPY…AMYG), 185-252 (AQPP…LPPV), 317-339 (KQSP…QSQK), 353-388 (STQA…EEPE), and 446-465 (PDDV…KNPM). The span at 201 to 241 (RSNSRSSARSTARSAPRSTQRSRSSSANPVTTPPVNNTLLT) shows a compositional bias: low complexity. 2 stretches are compositionally biased toward polar residues: residues 320–339 (PVAS…QSQK) and 353–372 (STQA…ASKK). A Phosphoserine modification is found at S323. Residues 376–388 (EEDEFYDSEEEPE) show a composition bias toward acidic residues. A Phosphoserine modification is found at S383. In terms of domain architecture, Helicase ATP-binding spans 562 to 730 (HLLYQQKLSG…VSLLAFILPN (169 aa)). An ATP-binding site is contributed by 575 to 582 (DEMGLGKT). Positions 681–684 (DEGH) match the DEGH box motif. A disordered region spans residues 816 to 839 (QQLRRDDKRNKRSKNDEESDGKSL). A compositionally biased stretch (basic and acidic residues) spans 818-831 (LRRDDKRNKRSKND). One can recognise a Helicase C-terminal domain in the interval 928 to 1079 (VLKELLPKMK…SLSSDGKDRE (152 aa)). The tract at residues 1088-1284 (DMLDEENNGN…SEVDNNAAKD (197 aa)) is disordered. Residues 1095-1107 (NGNNTKPEITGNE) show a composition bias toward polar residues. Positions 1143 to 1177 (EKTDLADGDEKANIKTEMKSETVEGDNKELRETMK) are enriched in basic and acidic residues. Polar residues predominate over residues 1180–1194 (NVQTDSNAAVPSSKS). Composition is skewed to basic and acidic residues over residues 1243–1256 (QLEK…KKPD) and 1266–1284 (EEEK…AAKD).

The protein belongs to the SNF2/RAD54 helicase family.

It localises to the cytoplasm. It is found in the nucleus. It catalyses the reaction ATP + H2O = ADP + phosphate + H(+). In terms of biological role, DNA helicase that possesses intrinsic ATP-dependent nucleosome-remodeling activity and is required for heterochromatin organization. The chain is ATP-dependent helicase fft2 (fft2) from Schizosaccharomyces pombe (strain 972 / ATCC 24843) (Fission yeast).